The primary structure comprises 644 residues: DNA gyrase subunit B (644 aa).

The Toprim domain occupies 429 to 543 (CEIFLVEGDS…AGYVYIAQPP (115 aa)). Positions 435, 508, and 510 each coordinate Mg(2+).

This sequence belongs to the type II topoisomerase GyrB family. Heterotetramer, composed of two GyrA and two GyrB chains. In the heterotetramer, GyrA contains the active site tyrosine that forms a transient covalent intermediate with DNA, while GyrB binds cofactors and catalyzes ATP hydrolysis. The cofactor is Mg(2+). Mn(2+) serves as cofactor. Requires Ca(2+) as cofactor.

It is found in the cytoplasm. It carries out the reaction ATP-dependent breakage, passage and rejoining of double-stranded DNA.. A type II topoisomerase that negatively supercoils closed circular double-stranded (ds) DNA in an ATP-dependent manner to modulate DNA topology and maintain chromosomes in an underwound state. Negative supercoiling favors strand separation, and DNA replication, transcription, recombination and repair, all of which involve strand separation. Also able to catalyze the interconversion of other topological isomers of dsDNA rings, including catenanes and knotted rings. Type II topoisomerases break and join 2 DNA strands simultaneously in an ATP-dependent manner. This is DNA gyrase subunit B from Staphylococcus aureus (strain USA300).